The sequence spans 358 residues: D-alanine--D-alanine ligase (358 aa).

The 206-residue stretch at 136 to 341 (KYILQAAGVP…YGDLIEELIQ (206 aa)) folds into the ATP-grasp domain. Residue 169 to 224 (EGSLLYPMFVKPANMGSSVGISKAENREELQNALALAYQYDSRAIVEQGIEAREIE) coordinates ATP. Asp-295, Glu-308, and Asn-310 together coordinate Mg(2+).

This sequence belongs to the D-alanine--D-alanine ligase family. Requires Mg(2+) as cofactor. It depends on Mn(2+) as a cofactor.

It localises to the cytoplasm. It catalyses the reaction 2 D-alanine + ATP = D-alanyl-D-alanine + ADP + phosphate + H(+). The protein operates within cell wall biogenesis; peptidoglycan biosynthesis. Functionally, cell wall formation. The polypeptide is D-alanine--D-alanine ligase (Enterococcus hirae (strain ATCC 9790 / DSM 20160 / JCM 8729 / LMG 6399 / NBRC 3181 / NCIMB 6459 / NCDO 1258 / NCTC 12367 / WDCM 00089 / R)).